We begin with the raw amino-acid sequence, 84 residues long: DNA-directed RNA polymerase subunit Rpo5 (84 aa).

Belongs to the archaeal Rpo5/eukaryotic RPB5 RNA polymerase subunit family. Part of the 13-subunit RNA polymerase complex.

The protein localises to the cytoplasm. The enzyme catalyses RNA(n) + a ribonucleoside 5'-triphosphate = RNA(n+1) + diphosphate. DNA-dependent RNA polymerase (RNAP) catalyzes the transcription of DNA into RNA using the four ribonucleoside triphosphates as substrates. This Saccharolobus solfataricus (strain ATCC 35092 / DSM 1617 / JCM 11322 / P2) (Sulfolobus solfataricus) protein is DNA-directed RNA polymerase subunit Rpo5.